Reading from the N-terminus, the 278-residue chain is MSLERALARLTGVPMSTHAPKTRESEEACPVYPHPVVPRLVLEVHRKNNALVGSNTPKMSVMGHLDIACLREHVKSRLSSPNFVGFTVVCLVEHEDMVTHIDLHPHVFQERVCLLRPTSPGITELCCLLSMLENCRDMSPTFLRSIICRARKTHERTPGMDAAFVMHGIETLTATAAFVYELSVDDHFRATPLVMFKLHKAIGDASTPMGGLMKPIYLESFKLESSGENEDDKQTCADPVNIFYCDTIFTKHLENNEVLKYLKMCTLFKPPIVSLFSK.

This sequence belongs to the herpesviridae cytoplasmic envelopment protein 1 family.

It localises to the virion. The protein localises to the virion tegument. It is found in the host cytoplasm. Its subcellular location is the host Golgi apparatus. Plays a critical role in cytoplasmic virus egress. Participates in the final step of tegumentation and envelope acquisition within the host cytoplasm. This is Cytoplasmic envelopment protein 1 (ORF42) from Homo sapiens (Human).